The primary structure comprises 135 residues: UPF0299 membrane protein YE2790 (135 aa).

Helical transmembrane passes span 4-24, 30-50, 63-83, and 93-113; these read VTSL…CLWA, LLLP…FALL, GCHL…VGVM, and FGPI…VVGY.

The protein belongs to the UPF0299 family.

The protein localises to the cell inner membrane. In Yersinia enterocolitica serotype O:8 / biotype 1B (strain NCTC 13174 / 8081), this protein is UPF0299 membrane protein YE2790.